The following is a 169-amino-acid chain: Crossover junction endodeoxyribonuclease RuvC (169 aa).

Catalysis depends on residues D11, E71, and D143. Positions 11, 71, and 143 each coordinate Mg(2+).

The protein belongs to the RuvC family. As to quaternary structure, homodimer which binds Holliday junction (HJ) DNA. The HJ becomes 2-fold symmetrical on binding to RuvC with unstacked arms; it has a different conformation from HJ DNA in complex with RuvA. In the full resolvosome a probable DNA-RuvA(4)-RuvB(12)-RuvC(2) complex forms which resolves the HJ. The cofactor is Mg(2+).

It is found in the cytoplasm. The catalysed reaction is Endonucleolytic cleavage at a junction such as a reciprocal single-stranded crossover between two homologous DNA duplexes (Holliday junction).. Its function is as follows. The RuvA-RuvB-RuvC complex processes Holliday junction (HJ) DNA during genetic recombination and DNA repair. Endonuclease that resolves HJ intermediates. Cleaves cruciform DNA by making single-stranded nicks across the HJ at symmetrical positions within the homologous arms, yielding a 5'-phosphate and a 3'-hydroxyl group; requires a central core of homology in the junction. The consensus cleavage sequence is 5'-(A/T)TT(C/G)-3'. Cleavage occurs on the 3'-side of the TT dinucleotide at the point of strand exchange. HJ branch migration catalyzed by RuvA-RuvB allows RuvC to scan DNA until it finds its consensus sequence, where it cleaves and resolves the cruciform DNA. The chain is Crossover junction endodeoxyribonuclease RuvC from Rhizobium leguminosarum bv. trifolii (strain WSM2304).